Consider the following 400-residue polypeptide: Probable tRNA sulfurtransferase (400 aa).

The 105-residue stretch at Glu60–Thr164 folds into the THUMP domain. ATP-binding positions include Leu182–Leu183, His207–Phe208, Arg264, Gly286, and Gln295.

Belongs to the ThiI family.

The protein resides in the cytoplasm. It catalyses the reaction [ThiI sulfur-carrier protein]-S-sulfanyl-L-cysteine + a uridine in tRNA + 2 reduced [2Fe-2S]-[ferredoxin] + ATP + H(+) = [ThiI sulfur-carrier protein]-L-cysteine + a 4-thiouridine in tRNA + 2 oxidized [2Fe-2S]-[ferredoxin] + AMP + diphosphate. It carries out the reaction [ThiS sulfur-carrier protein]-C-terminal Gly-Gly-AMP + S-sulfanyl-L-cysteinyl-[cysteine desulfurase] + AH2 = [ThiS sulfur-carrier protein]-C-terminal-Gly-aminoethanethioate + L-cysteinyl-[cysteine desulfurase] + A + AMP + 2 H(+). The protein operates within cofactor biosynthesis; thiamine diphosphate biosynthesis. Its function is as follows. Catalyzes the ATP-dependent transfer of a sulfur to tRNA to produce 4-thiouridine in position 8 of tRNAs, which functions as a near-UV photosensor. Also catalyzes the transfer of sulfur to the sulfur carrier protein ThiS, forming ThiS-thiocarboxylate. This is a step in the synthesis of thiazole, in the thiamine biosynthesis pathway. The sulfur is donated as persulfide by IscS. In Oceanobacillus iheyensis (strain DSM 14371 / CIP 107618 / JCM 11309 / KCTC 3954 / HTE831), this protein is Probable tRNA sulfurtransferase.